Reading from the N-terminus, the 77-residue chain is Oxyopinin-4a (77 aa).

Residues 1-20 (MKISQVFIFVFLLMISVAWA) form the signal peptide. The propeptide occupies 21–47 (NEAYEEESNYLSERFDADVEEITPEFR). Cys-51 and Cys-57 are oxidised to a cystine.

In terms of tissue distribution, expressed by the venom gland.

The protein resides in the secreted. It localises to the target cell membrane. Functionally, disrupts cell membranes through the formation of pores. Has antibacterial activity against Gram-positive bacteria S.aureus (MIC=10 uM) and B.subtilis (MIC=0.5 uM) as well as Gram-negative bacteria P.fluorescens (MIC=1 uM) and E.coli (MIC=0.5 uM). Has hemolytic activity against human erythrocytes (EC(50)=7 uM). The protein is Oxyopinin-4a of Oxyopes takobius (Lynx spider).